The sequence spans 173 residues: Probable transcription termination protein NusA (173 aa).

In terms of domain architecture, KH spans 31-97 (DEKIVFVVKE…EDVWVKKFGN (67 aa)). A compositionally biased stretch (basic and acidic residues) spans 147–162 (ADNRPKKDEIPEKAAE). The tract at residues 147–173 (ADNRPKKDEIPEKAAESSENVQAEENQ) is disordered. Polar residues predominate over residues 163–173 (SSENVQAEENQ).

Belongs to the NusA family.

It is found in the cytoplasm. Participates in transcription termination. This chain is Probable transcription termination protein NusA, found in Methanococcus vannielii (strain ATCC 35089 / DSM 1224 / JCM 13029 / OCM 148 / SB).